A 213-amino-acid chain; its full sequence is Virion protein US10 homolog (213 aa).

It belongs to the herpesviridae US10 family. Phosphorylated.

Its subcellular location is the virion tegument. It is found in the host nucleus matrix. The protein is Virion protein US10 homolog (US639) of Gallid herpesvirus 2 (strain GA) (GaHV-2).